A 278-amino-acid chain; its full sequence is Large ribosomal subunit protein uL2 (278 aa).

Disordered regions lie at residues 29-55 (PEKS…RHQG) and 225-278 (VMNP…NKKR). Residues 258–278 (RSNKKASNKYIVRRRTKNKKR) show a composition bias toward basic residues.

The protein belongs to the universal ribosomal protein uL2 family. In terms of assembly, part of the 50S ribosomal subunit. Forms a bridge to the 30S subunit in the 70S ribosome. In terms of processing, the N-terminus is blocked. Post-translationally, phosphorylated on serine and threonine residues.

One of the primary rRNA binding proteins. Required for association of the 30S and 50S subunits to form the 70S ribosome, for tRNA binding and peptide bond formation. It has been suggested to have peptidyltransferase activity; this is somewhat controversial. Makes several contacts with the 16S rRNA in the 70S ribosome. The sequence is that of Large ribosomal subunit protein uL2 from Streptomyces collinus.